Reading from the N-terminus, the 589-residue chain is Chromodomain Y-like protein (589 aa).

Positions 1–10 (MGLGSSQPST) are enriched in polar residues. The segment at 1-57 (MGLGSSQPSTKEAEPCTLQEKEEHPVDDTRQQNNAVPATVSDPDQVSPAVQDAETQV) is disordered. The segment covering 11 to 30 (KEAEPCTLQEKEEHPVDDTR) has biased composition (basic and acidic residues). Positions 55-115 (TQVESIVDKR…RHNERQKEGT (61 aa)) constitute a Chromo domain. Positions 55 to 300 (TQVESIVDKR…TIQTSVTGVT (246 aa)) are interaction with EZH2. Ser-82 is modified (phosphoserine). The segment at 110-155 (RQKEGTLARANRASPSNARKQISRSTHSALSKTNPKALVVGKDHES) is disordered. Low complexity predominate over residues 117–128 (ARANRASPSNAR). An N6,N6,N6-trimethyllysine; by EHMT2; alternate modification is found at Lys-129. The residue at position 129 (Lys-129) is an N6,N6-dimethyllysine; by EHMT2; alternate. Lys-129 is modified (N6-methyllysine; by EHMT2; alternate). Positions 132 to 143 (SRSTHSALSKTN) are enriched in polar residues. 3 positions are modified to phosphoserine: Ser-164, Ser-195, and Ser-210. A disordered region spans residues 202–224 (SIDGFHGESPEKLDQGAEDTVTP). Residues 206-216 (FHGESPEKLDQ) are compositionally biased toward basic and acidic residues. The segment at 353 to 585 (SENNSLNPEV…DSMLKYLQRK (233 aa)) is acetyl-CoA-binding domain.

As to quaternary structure, forms multimers and multimerization is required for stable binding to chromatin. Interacts with HDAC1 and HDAC2 via its C-terminal acetyl-CoA-binding domain. Interacts with EZH2, EED, SUZ12, REST, EHMT1 and EHMT2. Part of a complex containing at least CDYL, REST, WIZ, SETB1, EHMT1 and EHMT2. Part of a complex containing at least CDYL, MIER1, MIER2, HDAC1 and HDAC2. Interacts with CHAF1A and CHAF1B; bridging the CAF-1 complex to the MCM2-7 (MCM) complex. Interacts with MCM3 and MCM5; bridging the CAF-1 complex to the MCM2-7 (MCM) complex. Recruited to Xist RNA-coated X chromosome. Interacts with EHMT2 and PRDM9; interaction only takes place when PRDM9 is bound to hotspot DNA. Expressed in the brain, with expression in the hippocampal dentate gyrus, CA1, striatum and cortex (at protein level). Expressed in the prelimbic cortex.

Its subcellular location is the nucleus. The protein localises to the chromosome. The catalysed reaction is 3-hydroxybutanoyl-CoA = (2E)-butenoyl-CoA + H2O. Functionally, chromatin reader protein that recognizes and binds histone H3 trimethylated at 'Lys-9', dimethylated at 'Lys-27' and trimethylated at 'Lys-27' (H3K9me3, H3K27me2 and H3K27me3, respectively). Part of multimeric repressive chromatin complexes, where it is required for transmission and restoration of repressive histone marks, thereby preserving the epigenetic landscape. Required for chromatin targeting and maximal enzymatic activity of Polycomb repressive complex 2 (PRC2); acts as a positive regulator of PRC2 activity by bridging the pre-existing histone H3K27me3 and newly recruited PRC2 on neighboring nucleosomes. Acts as a corepressor for REST by facilitating histone-lysine N-methyltransferase EHMT2 recruitment and H3K9 dimethylation at REST target genes for repression. Involved in X chromosome inactivation in females: recruited to Xist RNA-coated X chromosome and facilitates propagation of H3K9me2 by anchoring EHMT2. Promotes EZH2 accumulation and H3K27me3 methylation at DNA double strand breaks (DSBs), thereby facilitating transcriptional repression at sites of DNA damage and homology-directed repair of DSBs. Required for neuronal migration during brain development by repressing expression of RHOA. By repressing the expression of SCN8A, contributes to the inhibition of intrinsic neuronal excitability and epileptogenesis. In addition to acting as a chromatin reader, acts as a hydro-lyase. Shows crotonyl-coA hydratase activity by mediating the conversion of crotonyl-CoA ((2E)-butenoyl-CoA) to beta-hydroxybutyryl-CoA (3-hydroxybutanoyl-CoA), thereby acting as a negative regulator of histone crotonylation. Histone crotonylation is required during spermatogenesis; down-regulation of histone crotonylation by CDYL regulates the reactivation of sex chromosome-linked genes in round spermatids and histone replacement in elongating spermatids. By regulating histone crotonylation and trimethylation of H3K27, may be involved in stress-induced depression-like behaviors, possibly by regulating VGF expression. Displays acetyltransferase activity toward tubulin in vitro; such activity is however unsure in vivo and additional evidences would be required to confirm this result. Its function is as follows. Not able to recognize and bind histone H3K9me3, histone H3K27me2 and histone H3K27me3, due to the presence of a N-terminal extension that inactivates the chromo domain. The protein is Chromodomain Y-like protein of Rattus norvegicus (Rat).